The following is a 435-amino-acid chain: uncharacterized protein (435 aa).

12 consecutive transmembrane segments (helical) span residues Val14–Ala34, Thr44–Ala64, Ile84–Phe104, Phe123–Gly143, Phe153–Ile173, Val187–Ile207, Ala224–Ile244, Phe267–Ala287, Leu324–Ala344, Ile346–Ile366, Ile375–Trp395, and Phe400–Arg420.

The protein localises to the cell membrane. This is an uncharacterized protein from Methanocaldococcus jannaschii (strain ATCC 43067 / DSM 2661 / JAL-1 / JCM 10045 / NBRC 100440) (Methanococcus jannaschii).